The chain runs to 148 residues: MEGRQYYPPRENVEGNRTTMGGGPHSPWHSPVPYLFGGLAAMLGLIAFALLILACSYWRLSGYLDGEENQSRERDLEVGDVKPDKTAVKPVALPEKFLVIMAGNVKPTYLATPSVKTCTCDDDDDEDDDVEGSDQVVPRSSESNGETH.

The segment at 1 to 24 (MEGRQYYPPRENVEGNRTTMGGGP) is disordered. Residues 1 to 34 (MEGRQYYPPRENVEGNRTTMGGGPHSPWHSPVPY) lie on the Extracellular side of the membrane. The helical transmembrane segment at 35 to 55 (LFGGLAAMLGLIAFALLILAC) threads the bilayer. Over 56–148 (SYWRLSGYLD…RSSESNGETH (93 aa)) the chain is Cytoplasmic. The VIMAG motif lies at 99 to 103 (VIMAG). The segment covering 120–132 (CDDDDDEDDDVEG) has biased composition (acidic residues). The interval 120 to 148 (CDDDDDEDDDVEGSDQVVPRSSESNGETH) is disordered. A compositionally biased stretch (polar residues) spans 138–148 (PRSSESNGETH).

Belongs to the GLUTAMINE DUMPER 1 (TC 9.B.60) family. Expressed in the vascular tissues. Also detected in anthers.

The protein resides in the membrane. Its function is as follows. Probable subunit of an amino acid transporter involved in the regulation of the amino acid metabolism. Stimulates amino acid export by activating nonselective amino acid facilitators. Acts upstream genes involved in the salicylic acid (SA) pathway and in the geminivirus-host interaction. In Arabidopsis thaliana (Mouse-ear cress), this protein is Protein GLUTAMINE DUMPER 3 (GDU3).